Here is a 225-residue protein sequence, read N- to C-terminus: N-(5'-phosphoribosyl)anthranilate isomerase (225 aa).

This sequence belongs to the TrpF family.

It catalyses the reaction N-(5-phospho-beta-D-ribosyl)anthranilate = 1-(2-carboxyphenylamino)-1-deoxy-D-ribulose 5-phosphate. Its pathway is amino-acid biosynthesis; L-tryptophan biosynthesis; L-tryptophan from chorismate: step 3/5. This Nitrobacter hamburgensis (strain DSM 10229 / NCIMB 13809 / X14) protein is N-(5'-phosphoribosyl)anthranilate isomerase.